Consider the following 459-residue polypeptide: 1,3-beta-glucanosyltransferase gas2 (459 aa).

Residues 1–19 (MVSFTKFTLQLLSASAAFA) form the signal peptide. 2 N-linked (GlcNAc...) asparagine glycosylation sites follow: N34 and N68. Cysteines 69 and 98 form a disulfide. Y87 is a binding site for (1,3-beta-D-glucosyl)n. 3 N-linked (GlcNAc...) asparagine glycosylation sites follow: N90, N104, and N146. 2 residues coordinate (1,3-beta-D-glucosyl)n: N155 and E156. Catalysis depends on E156, which acts as the Proton donor. An N-linked (GlcNAc...) asparagine glycan is attached at N160. (1,3-beta-D-glucosyl)n-binding residues include D197 and R202. Cystine bridges form between C211–C350 and C235–C266. N-linked (GlcNAc...) asparagine glycosylation is found at N212, N218, and N254. The active-site Nucleophile is the E263. The N-linked (GlcNAc...) asparagine glycan is linked to N284. (1,3-beta-D-glucosyl)n is bound at residue Y295. N308, N334, N344, N354, and N370 each carry an N-linked (GlcNAc...) asparagine glycan. 3 disulfide bridges follow: C374-C427, C383-C449, and C402-C409. N423 carries N-linked (GlcNAc...) asparagine glycosylation.

This sequence belongs to the glycosyl hydrolase 72 family.

It localises to the endoplasmic reticulum lumen. The protein localises to the secreted. Splits internally a 1,3-beta-glucan molecule and transfers the newly generated reducing end (the donor) to the non-reducing end of another 1,3-beta-glucan molecule (the acceptor) forming a 1,3-beta linkage, resulting in the elongation of 1,3-beta-glucan chains in the cell wall. This is 1,3-beta-glucanosyltransferase gas2 (gas2) from Schizosaccharomyces pombe (strain 972 / ATCC 24843) (Fission yeast).